The chain runs to 102 residues: Large ribosomal subunit protein bL21 (102 aa).

The protein belongs to the bacterial ribosomal protein bL21 family. In terms of assembly, part of the 50S ribosomal subunit. Contacts protein L20.

Functionally, this protein binds to 23S rRNA in the presence of protein L20. In Lachnoclostridium phytofermentans (strain ATCC 700394 / DSM 18823 / ISDg) (Clostridium phytofermentans), this protein is Large ribosomal subunit protein bL21.